We begin with the raw amino-acid sequence, 92 residues long: Co-chaperonin GroES (92 aa).

This sequence belongs to the GroES chaperonin family. In terms of assembly, heptamer of 7 subunits arranged in a ring. Interacts with the chaperonin GroEL.

It is found in the cytoplasm. Its function is as follows. Together with the chaperonin GroEL, plays an essential role in assisting protein folding. The GroEL-GroES system forms a nano-cage that allows encapsulation of the non-native substrate proteins and provides a physical environment optimized to promote and accelerate protein folding. GroES binds to the apical surface of the GroEL ring, thereby capping the opening of the GroEL channel. This is Co-chaperonin GroES from Methanosarcina mazei (strain ATCC BAA-159 / DSM 3647 / Goe1 / Go1 / JCM 11833 / OCM 88) (Methanosarcina frisia).